A 399-amino-acid chain; its full sequence is Probable peptidoglycan glycosyltransferase FtsW (399 aa).

Over 1 to 25 (MTAAAPSKPLPRTPRVRQAYPLDYP) the chain is Cytoplasmic. Residues 26–46 (LLLCALGLLAFGWVMVTSASM) traverse the membrane as a helical segment. The Periplasmic segment spans residues 47 to 64 (SIAEACCQNPFHYSIRHA). Residues 65-85 (IALGLALMLGLMAYSVPSHWW) traverse the membrane as a helical segment. At 86–88 (ERH) the chain is on the cytoplasmic side. A helical membrane pass occupies residues 89–109 (GVWLFLASALVLILVLIPGIG). At 110–117 (RTVNGATR) the chain is on the periplasmic side. The chain crosses the membrane as a helical span at residues 118-138 (WIPLGPLNVQPSEFVKLFAIL). Topologically, residues 139–153 (YVAGYLVRHADKVVN) are cytoplasmic. A helical membrane pass occupies residues 154 to 174 (QLSGFIRPLILIGAAALLILM). Residues 175-177 (QPD) are Periplasmic-facing. The next 2 membrane-spanning stretches (helical) occupy residues 178–198 (FGTT…GGAS) and 199–219 (LLPF…LVIF). Over 220–281 (SPYRLERVVS…PEAHTDFLPS (62 aa)) the chain is Periplasmic. A helical membrane pass occupies residues 282-302 (VIGEELGLAGMLVLIAAFVFL). The Cytoplasmic portion of the chain corresponds to 303-326 (SWRAMSIGVRAEALKRPFESYVAQ). A helical transmembrane segment spans residues 327–347 (GIGLWIGLQSFVNLGVNVGIL). At 348 to 353 (PTKGLT) the chain is on the periplasmic side. The helical transmembrane segment at 354–374 (LPFMSYGSNSLMVGCMAVAIL) threads the bilayer. At 375–399 (LRIDVMLRRVESEAKFKRGTPWSRA) the chain is on the cytoplasmic side.

This sequence belongs to the SEDS family. FtsW subfamily.

It is found in the cell inner membrane. The enzyme catalyses [GlcNAc-(1-&gt;4)-Mur2Ac(oyl-L-Ala-gamma-D-Glu-L-Lys-D-Ala-D-Ala)](n)-di-trans,octa-cis-undecaprenyl diphosphate + beta-D-GlcNAc-(1-&gt;4)-Mur2Ac(oyl-L-Ala-gamma-D-Glu-L-Lys-D-Ala-D-Ala)-di-trans,octa-cis-undecaprenyl diphosphate = [GlcNAc-(1-&gt;4)-Mur2Ac(oyl-L-Ala-gamma-D-Glu-L-Lys-D-Ala-D-Ala)](n+1)-di-trans,octa-cis-undecaprenyl diphosphate + di-trans,octa-cis-undecaprenyl diphosphate + H(+). The protein operates within cell wall biogenesis; peptidoglycan biosynthesis. Peptidoglycan polymerase that is essential for cell division. The chain is Probable peptidoglycan glycosyltransferase FtsW from Allochromatium vinosum (strain ATCC 17899 / DSM 180 / NBRC 103801 / NCIMB 10441 / D) (Chromatium vinosum).